The sequence spans 440 residues: Chromosome partition protein MukF (440 aa).

The segment at 208-236 is leucine-zipper; sequence LSETSGTLRELQDTLEAAGDKLQANLLRI.

The protein belongs to the MukF family. As to quaternary structure, interacts, and probably forms a ternary complex, with MukE and MukB via its C-terminal region. The complex formation is stimulated by calcium or magnesium. It is required for an interaction between MukE and MukB.

The protein resides in the cytoplasm. It localises to the nucleoid. Functionally, involved in chromosome condensation, segregation and cell cycle progression. May participate in facilitating chromosome segregation by condensation DNA from both sides of a centrally located replisome during cell division. Not required for mini-F plasmid partitioning. Probably acts via its interaction with MukB and MukE. Overexpression results in anucleate cells. It has a calcium binding activity. The protein is Chromosome partition protein MukF of Escherichia coli (strain UTI89 / UPEC).